Consider the following 415-residue polypeptide: Gamma-glutamyl phosphate reductase (415 aa).

It belongs to the gamma-glutamyl phosphate reductase family.

The protein resides in the cytoplasm. It carries out the reaction L-glutamate 5-semialdehyde + phosphate + NADP(+) = L-glutamyl 5-phosphate + NADPH + H(+). The protein operates within amino-acid biosynthesis; L-proline biosynthesis; L-glutamate 5-semialdehyde from L-glutamate: step 2/2. Functionally, catalyzes the NADPH-dependent reduction of L-glutamate 5-phosphate into L-glutamate 5-semialdehyde and phosphate. The product spontaneously undergoes cyclization to form 1-pyrroline-5-carboxylate. The sequence is that of Gamma-glutamyl phosphate reductase from Mycobacterium sp. (strain JLS).